The chain runs to 122 residues: Large ribosomal subunit protein bL12 (122 aa).

The protein belongs to the bacterial ribosomal protein bL12 family. Homodimer. Part of the ribosomal stalk of the 50S ribosomal subunit. Forms a multimeric L10(L12)X complex, where L10 forms an elongated spine to which 2 to 4 L12 dimers bind in a sequential fashion. Binds GTP-bound translation factors.

Functionally, forms part of the ribosomal stalk which helps the ribosome interact with GTP-bound translation factors. Is thus essential for accurate translation. In Buchnera aphidicola subsp. Schizaphis graminum (strain Sg), this protein is Large ribosomal subunit protein bL12.